Reading from the N-terminus, the 424-residue chain is 3-oxo-tetronate kinase (424 aa).

ATP is bound by residues Ser-260, 364–367 (GGET), and Gly-407.

It belongs to the four-carbon acid sugar kinase family.

The catalysed reaction is 3-dehydro-L-erythronate + ATP = 3-dehydro-4-O-phospho-L-erythronate + ADP + H(+). It catalyses the reaction 3-dehydro-D-erythronate + ATP = 3-dehydro-4-O-phospho-D-erythronate + ADP + H(+). In terms of biological role, catalyzes the ATP-dependent phosphorylation of 3-oxo-tetronate to 3-oxo-tetronate 4-phosphate. This chain is 3-oxo-tetronate kinase, found in Pectobacterium atrosepticum (strain SCRI 1043 / ATCC BAA-672) (Erwinia carotovora subsp. atroseptica).